The following is a 410-amino-acid chain: Lysosome-associated membrane glycoprotein 2 (410 aa).

The N-terminal stretch at 1-28 (MMCFRLSPVSGSGLVLSCLLLGAVQSYA) is a signal peptide. A first lumenal domain region spans residues 29–192 (FELNLPDSKA…SKEEFVCEED (164 aa)). At 29–375 (FELNLPDSKA…QDCSADEDNF (347 aa)) the chain is on the lumenal side. The cysteines at positions 40 and 79 are disulfide-linked. N48, N58, N71, N75, N99, N119, N123, N179, N222, N229, N242, N260, N275, N300, N307, N317, and N356 each carry an N-linked (GlcNAc...) asparagine glycan. Residues C153 and C189 are joined by a disulfide bond. Residues 193–228 (KSVTTVRPIIHTTVPPPTTTPTPLPPKVGNYSVSNG) form a hinge region. Residues 229–375 (NATCLLATMG…QDCSADEDNF (147 aa)) form a second lumenal domain region. A disulfide bridge links C232 with C265. Cysteines 331 and 368 form a disulfide. Residues 376 to 399 (LVPIAVGAALAGVLALVLLAYFIG) form a helical membrane-spanning segment. Over 400 to 410 (LKRHHTGYEQF) the chain is Cytoplasmic. An important for binding and subsequent lysosomal degradation of target proteins region spans residues 401-404 (KRHH).

This sequence belongs to the LAMP family. In terms of assembly, monomer. Forms large homooligomers. Interacts (via its cytoplasmic region) with HSPA8; HSPA8 mediates recruitment of proteins with a KFERQ motif to the surface of the lysosome for chaperone-mediated autophagy. Interacts with HSP90 in the lysosome lumen; this enhances LAMP2 stability. Interacts with MLLT11. Interacts with ABCB9. Interacts with FURIN. Interacts with CT55; this interaction may be important for LAMP2 protein stability. Interacts with TMEM175; inhibiting the proton channel activity of TMEM175. Forms a ternary complex with RAB7A and RUFY4 (via RUN domain); the interaction with RAB7A is mediated by RUFY4 (via RUN and coiled coil domains). Extensively N-glycosylated. Contains a minor proportion of O-linked glycans.

The protein resides in the lysosome membrane. It localises to the endosome membrane. The protein localises to the cell membrane. Its subcellular location is the cytoplasmic vesicle. It is found in the autophagosome membrane. Its function is as follows. Lysosomal membrane glycoprotein which plays an important role in lysosome biogenesis, lysosomal pH regulation and autophagy. Acts as an important regulator of lysosomal lumen pH regulation by acting as a direct inhibitor of the proton channel TMEM175, facilitating lysosomal acidification for optimal hydrolase activity. Plays an important role in chaperone-mediated autophagy, a process that mediates lysosomal degradation of proteins in response to various stresses and as part of the normal turnover of proteins with a long biological half-live. Functions by binding target proteins, such as GAPDH, NLRP3 and MLLT11, and targeting them for lysosomal degradation. In the chaperone-mediated autophagy, acts downstream of chaperones, such as HSPA8/HSC70, which recognize and bind substrate proteins and mediate their recruitment to lysosomes, where target proteins bind LAMP2. Plays a role in lysosomal protein degradation in response to starvation. Required for the fusion of autophagosomes with lysosomes during autophagy. Cells that lack LAMP2 express normal levels of VAMP8, but fail to accumulate STX17 on autophagosomes, which is the most likely explanation for the lack of fusion between autophagosomes and lysosomes. Required for normal degradation of the contents of autophagosomes. Required for efficient MHC class II-mediated presentation of exogenous antigens via its function in lysosomal protein degradation; antigenic peptides generated by proteases in the endosomal/lysosomal compartment are captured by nascent MHC II subunits. Is not required for efficient MHC class II-mediated presentation of endogenous antigens. This Cricetulus griseus (Chinese hamster) protein is Lysosome-associated membrane glycoprotein 2 (LAMP2).